Reading from the N-terminus, the 132-residue chain is Small ribosomal subunit protein uS8 (132 aa).

This sequence belongs to the universal ribosomal protein uS8 family. Part of the 30S ribosomal subunit. Contacts proteins S5 and S12.

One of the primary rRNA binding proteins, it binds directly to 16S rRNA central domain where it helps coordinate assembly of the platform of the 30S subunit. The chain is Small ribosomal subunit protein uS8 from Streptomyces coelicolor (strain ATCC BAA-471 / A3(2) / M145).